We begin with the raw amino-acid sequence, 659 residues long: Hemocyanin subunit B (659 aa).

Positions 1 to 18 (MVAKWCVLAMCLLVAVGA) are cleaved as a signal peptide. Cu cation is bound by residues histidine 198, histidine 202, and histidine 232. Asparagine 318 carries an N-linked (GlcNAc...) asparagine glycan. Cu cation contacts are provided by histidine 353, histidine 357, and histidine 393. A disulfide bridge connects residues cysteine 562 and cysteine 609.

It belongs to the tyrosinase family. Hemocyanin subfamily. 36-chain polymer consisting of 6 hexamers, each of which includes 4 different chains, A, B, C and D. As to expression, hemolymph.

The protein resides in the secreted. The protein localises to the extracellular space. Its function is as follows. Hemocyanins are copper-containing oxygen carriers occurring freely dissolved in the hemolymph of many mollusks and arthropods. The chain is Hemocyanin subunit B (HCB) from Scutigera coleoptrata (House centipede).